Here is a 330-residue protein sequence, read N- to C-terminus: Serine/threonine-protein phosphatase PP1-alpha catalytic subunit (330 aa).

At Ser-2 the chain carries N-acetylserine. Residues Ser-2 and Ser-22 each carry the phosphoserine modification. Mn(2+) contacts are provided by Asp-64, His-66, Asp-92, and Asn-124. Catalysis depends on His-125, which acts as the Proton donor. The Mn(2+) site is built by His-173 and His-248. At Lys-305 the chain carries N6-acetyllysine. Tyr-306 is subject to Phosphotyrosine. The disordered stretch occupies residues 306–330; the sequence is YGQFSGLNPGGRPITPPRNSAKAKK. Thr-320 bears the Phosphothreonine mark. At Ser-325 the chain carries Phosphoserine.

Belongs to the PPP phosphatase family. PP-1 subfamily. In terms of assembly, PP1 comprises a catalytic subunit, PPP1CA, PPP1CB or PPP1CC, which is folded into its native form by inhibitor 2 and glycogen synthetase kinase 3, and then complexed to one or several targeting or regulatory subunits. PPP1R12A, PPP1R12B and PPP1R12C mediate binding to myosin. PPP1R3A (in skeletal muscle), PPP1R3B (in liver), PPP1R3C, PPP1R3D and PPP1R3F (in brain) mediate binding to glycogen. Interacts with PPP1R15A and PPP1R15B; the interactions mediate binding to EIF2S1. Part of a complex containing PPP1R15B, PP1 and NCK1/2. Interacts with PPP1R9A, PPP1R9B and PPP1R7. Interacts with YLPM1. Forms a complex with ILF2, ILF3, YLPM1, KHDRBS1, RBMX and NCOA5. Interacts with NOM1 and PPP1R8. Interacts with PPP1R16B. Interacts with RPSA only in the presence of PPP1R16B. Component of the PNUTS-PP1 phosphatase complex, composed of PPP1R10/PNUTS, TOX4, WDR82, and PPP1CA or PPP1CB or PPP1CC. Interacts with PPP1R10/PNUTS and PPP1R8. Interacts with WDR82 in the presence of PPP1R10/PNUTS. Interacts with PPP1R39. transition from mitosis into interphase. Interacts with TRIM28; the interaction dephosphorylates TRIM28 on 'Ser-824' and forms a complex at the p21 promoter site. Interacts with NEK2. Interacts with PHACTR4; which acts as an activator of PP1 activity. Interacts with FER; this promotes phosphorylation at Thr-320. Interacts with BTBD10. Interacts with KCTD20. Interacts with FOXP3. Interacts with CENPA. Interacts with ATG16L1. Found in a complex with PPP1CA, PPP1CC, SHC1 and PEAK1. Interacts with tensin TNS1. Interacts with SAXO4, PPP1R21, PPP1R26, PPP1R27, PPP1R35, PPP1R36, PPP1R37, SH3RF2, ELFN1 and ELFN2. Interacts with TPRN; the interaction results in inhibition of PPC1A phosphatase activity. Interacts with SKA1 (via C-terminus); the interaction is direct and required for the recruitment of PP1 to the kinetochore. Interacts with the KNL1 complex subunit KNL1; the interaction is direct and mutually exclusive with KNL1 binding to microtubules. Component of the SHOC2-MRAS-PP1c (SMP) complex consisting of SHOC2, GTP-bound M-Ras/MRAS and the catalytic subunit of protein phosphatase 1 (either PPP1CA, PPP1CB or PPP1CC). SHOC2 and PP1c preferably bind M-Ras/MRAS, but they also bind K-Ras/KRAS, N-Ras/NRAS and H-Ras/HRAS; these interactions are GTP-dependent and both SHOC2 and PP1c are required to form a stable complex. Interacts with SHOC2 in the absence of Ras GTPases. Requires Mn(2+) as cofactor. Post-translationally, phosphorylated. Dephosphorylated at Thr-320 in the presence of ionizing radiation.

It is found in the cytoplasm. Its subcellular location is the nucleus. The protein resides in the nucleoplasm. The protein localises to the nucleolus. It carries out the reaction O-phospho-L-seryl-[protein] + H2O = L-seryl-[protein] + phosphate. The catalysed reaction is O-phospho-L-threonyl-[protein] + H2O = L-threonyl-[protein] + phosphate. Its function is as follows. Protein phosphatase that associates with over 200 regulatory proteins to form highly specific holoenzymes which dephosphorylate hundreds of biological targets. Protein phosphatase 1 (PP1) is essential for cell division, transcription elongation, and participates in the regulation of glycogen metabolism, muscle contractility and protein synthesis. Involved in regulation of ionic conductances and long-term synaptic plasticity. May play an important role in dephosphorylating substrates such as the postsynaptic density-associated Ca(2+)/calmodulin dependent protein kinase II. Catalytic component of the PNUTS-PP1 protein phosphatase complex, a protein phosphatase 1 (PP1) complex that promotes RNA polymerase II transcription pause-release, allowing transcription elongation: the PNUTS-PP1 complex mediates the release of RNA polymerase II from promoter-proximal region of genes by catalyzing dephosphorylation of proteins involved in transcription, such as AFF4, CDK9, MEPCE, INTS12, NCBP1, POLR2M/GDOWN1 and SUPT6H. The PNUTS-PP1 complex also regulates transcription termination by mediating dephosphorylation of SUPT5H in termination zones downstream of poly(A) sites, thereby promoting deceleration of RNA polymerase II transcription. PNUTS-PP1 complex is also involved in the response to replication stress by mediating dephosphorylation of POLR2A at 'Ser-5' of the CTD, promoting RNA polymerase II degradation. PNUTS-PP1 also plays a role in the control of chromatin structure and cell cycle progression during the transition from mitosis into interphase. Regulates NEK2 function in terms of kinase activity and centrosome number and splitting, both in the presence and absence of radiation-induced DNA damage. Regulator of neural tube and optic fissure closure, and enteric neural crest cell (ENCCs) migration during development. In balance with CSNK1D and CSNK1E, determines the circadian period length, through the regulation of the speed and rhythmicity of PER1 and PER2 phosphorylation. May dephosphorylate CSNK1D and CSNK1E. Dephosphorylates the 'Ser-418' residue of FOXP3 in regulatory T-cells (Treg) from patients with rheumatoid arthritis, thereby inactivating FOXP3 and rendering Treg cells functionally defective. Dephosphorylates CENPA. Dephosphorylates the 'Ser-139' residue of ATG16L1 causing dissociation of ATG12-ATG5-ATG16L1 complex, thereby inhibiting autophagy. Together with PPP1CC (PP1-gamma subunit), dephosphorylates IFIH1/MDA5 and RIG-I leading to their activation and a functional innate immune response. Core component of the SHOC2-MRAS-PP1c (SMP) holophosphatase complex that regulates the MAPK pathway activation. The SMP complex specifically dephosphorylates the inhibitory phosphorylation at 'Ser-259' of RAF1 kinase, 'Ser-365' of BRAF kinase and 'Ser-214' of ARAF kinase, stimulating their kinase activities. The SMP complex enhances the dephosphorylation activity and substrate specificity of PP1c. The polypeptide is Serine/threonine-protein phosphatase PP1-alpha catalytic subunit (PPP1CA) (Canis lupus familiaris (Dog)).